The primary structure comprises 471 residues: UDP-glycosyltransferase 71A15 (471 aa).

UDP-alpha-D-glucose-binding positions include Ser-282, 348 to 349, 366 to 374, and 388 to 391; these read WA, HCGWNSTLE, and YAEQ.

Belongs to the UDP-glycosyltransferase family.

Its function is as follows. Glycosyltransferase that possesses chalcone and flavonol 2'-O-glycosyltransferase activity. Converts phloretin to phlorizin (phloretin 2'-O-glucoside), a potent antioxidant. Possesses glycosyltransferase activity toward, naringenin, naringenin chalcone, eriodictyol, eriodictyol chalcone, apigenin, luteolin, kaempferol, quercetin, isoliquiritigenin, butein and caffeic acid. Can convert phloretin to phloretin 4'-O-glucoside and phloretin 4-O-glucoside. The sequence is that of UDP-glycosyltransferase 71A15 from Malus domestica (Apple).